A 901-amino-acid polypeptide reads, in one-letter code: Cyanophycin synthetase (901 aa).

Positions 224-478 (KRILAASGVP…VAGAVMDMLF (255 aa)) constitute an ATP-grasp domain. Position 493–499 (493–499 (GTNGKTT)) interacts with ATP.

The protein in the C-terminal section; belongs to the MurCDEF family. Homodimer.

It carries out the reaction [L-4-(L-arginin-2-N-yl)aspartate](n) + L-aspartate + ATP = [L-4-(L-arginin-2-N-yl)aspartate](n)-L-aspartate + ADP + phosphate + H(+). The catalysed reaction is [L-4-(L-arginin-2-N-yl)aspartate](n)-L-aspartate + L-arginine + ATP = [L-4-(L-arginin-2-N-yl)aspartate](n+1) + ADP + phosphate + H(+). Its function is as follows. Catalyzes the ATP-dependent polymerization of arginine and aspartate to multi-L-arginyl-poly-L-aspartic acid (cyanophycin; a water-insoluble reserve polymer). In Nostoc sp. (strain PCC 7120 / SAG 25.82 / UTEX 2576), this protein is Cyanophycin synthetase (cphA).